A 31-amino-acid polypeptide reads, in one-letter code: Potassium channel toxin alpha-KTx 5.5 (31 aa).

Disulfide bonds link Cys-3–Cys-21, Cys-8–Cys-26, and Cys-12–Cys-28. The tract at residues 6–9 (RRCE) is [R/K]XCQ motif. Histidine amide is present on His-31.

In terms of tissue distribution, expressed by the venom gland.

It is found in the secreted. Functionally, blocks small conductance calcium-activated potassium channels. The protein is Potassium channel toxin alpha-KTx 5.5 of Hottentotta tamulus (Eastern Indian scorpion).